The sequence spans 186 residues: Negative modulator of initiation of replication (186 aa).

Residues 93 to 94 (AV) are interaction with DNA.

It belongs to the SeqA family. As to quaternary structure, homodimer. Polymerizes to form helical filaments.

The protein resides in the cytoplasm. Functionally, negative regulator of replication initiation, which contributes to regulation of DNA replication and ensures that replication initiation occurs exactly once per chromosome per cell cycle. Binds to pairs of hemimethylated GATC sequences in the oriC region, thus preventing assembly of replication proteins and re-initiation at newly replicated origins. Repression is relieved when the region becomes fully methylated. This chain is Negative modulator of initiation of replication, found in Shewanella halifaxensis (strain HAW-EB4).